The chain runs to 138 residues: Ribulose bisphosphate carboxylase small subunit (138 aa).

The protein belongs to the RuBisCO small chain family. Heterohexadecamer of 8 large and 8 small subunits.

The protein resides in the plastid. The protein localises to the chloroplast. In terms of biological role, ruBisCO catalyzes two reactions: the carboxylation of D-ribulose 1,5-bisphosphate, the primary event in carbon dioxide fixation, as well as the oxidative fragmentation of the pentose substrate in the photorespiration process. Both reactions occur simultaneously and in competition at the same active site. Although the small subunit is not catalytic it is essential for maximal activity. The sequence is that of Ribulose bisphosphate carboxylase small subunit from Pyropia yezoensis (Susabi-nori).